Reading from the N-terminus, the 2312-residue chain is Protein Ycf2 (2312 aa).

Disordered stretches follow at residues 170–191 (SSQL…GTED), 223–253 (TEIE…EMNN), and 942–1009 (KRKK…KRKE). Residues 232–242 (KGLSGSSSKSR) are compositionally biased toward low complexity. 2 stretches are compositionally biased toward basic and acidic residues: residues 243 to 252 (LFTEGEKEMN) and 950 to 1007 (KRKE…PEKR). 1439–1446 (GSIGSGRS) lines the ATP pocket. Disordered stretches follow at residues 1513–1532 (YEDR…YEPG), 1857–1983 (LVGS…LLRP), and 2050–2166 (PAEE…DGFS). Positions 1863-1963 (TEEEVEGTEE…GEGTEDEEVE (101 aa)) are enriched in acidic residues. Residues 1964 to 1976 (GTEKDSSQFDNDR) show a composition bias toward basic and acidic residues. Composition is skewed to acidic residues over residues 2050–2067 (PAEE…EALE) and 2074–2149 (GEEE…ENDS).

This sequence belongs to the Ycf2 family.

Its subcellular location is the plastid. The protein localises to the chloroplast stroma. Its function is as follows. Probable ATPase of unknown function. Its presence in a non-photosynthetic plant (Epifagus virginiana) and experiments in tobacco indicate that it has an essential function which is probably not related to photosynthesis. In Oenothera parviflora (Small-flowered evening primrose), this protein is Protein Ycf2.